The chain runs to 448 residues: Methylenetetrahydrofolate--tRNA-(uracil-5-)-methyltransferase TrmFO (448 aa).

Residue 10 to 15 (GAGLAG) coordinates FAD.

The protein belongs to the MnmG family. TrmFO subfamily. FAD serves as cofactor.

The protein resides in the cytoplasm. It carries out the reaction uridine(54) in tRNA + (6R)-5,10-methylene-5,6,7,8-tetrahydrofolate + NADH + H(+) = 5-methyluridine(54) in tRNA + (6S)-5,6,7,8-tetrahydrofolate + NAD(+). It catalyses the reaction uridine(54) in tRNA + (6R)-5,10-methylene-5,6,7,8-tetrahydrofolate + NADPH + H(+) = 5-methyluridine(54) in tRNA + (6S)-5,6,7,8-tetrahydrofolate + NADP(+). Its function is as follows. Catalyzes the folate-dependent formation of 5-methyl-uridine at position 54 (M-5-U54) in all tRNAs. The sequence is that of Methylenetetrahydrofolate--tRNA-(uracil-5-)-methyltransferase TrmFO from Lactococcus lactis subsp. cremoris (strain SK11).